Reading from the N-terminus, the 673-residue chain is Pesticin receptor (673 aa).

A signal peptide spans 1–22 (MKMTRLYPLALGGLLLPAIANA). The short motif at 30 to 37 (STLEVTAS) is the TonB box element. The TBDR plug domain occupies 41–155 (SRSASANNVS…QGGIINIVTQ (115 aa)). A TBDR beta-barrel domain is found at 160 to 672 (TPRGYIEGGV…TVGINTRIDF (513 aa)). The TonB C-terminal box signature appears at 657-673 (QVNMGRTVGINTRIDFF).

This sequence belongs to the TonB-dependent receptor family.

It localises to the cell outer membrane. Receptor for the bacteriocin pesticin and for the siderophore yersiniabactin. The chain is Pesticin receptor (fyuA) from Yersinia enterocolitica serotype O:8 / biotype 1B (strain NCTC 13174 / 8081).